We begin with the raw amino-acid sequence, 172 residues long: Shikimate kinase (172 aa).

An ATP-binding site is contributed by glycine 11–threonine 16. A Mg(2+)-binding site is contributed by serine 15. Residues aspartate 33, arginine 57, and glycine 79 each contribute to the substrate site. Arginine 117 is an ATP binding site. Arginine 136 contributes to the substrate binding site. Arginine 153 is an ATP binding site.

It belongs to the shikimate kinase family. Monomer. Mg(2+) is required as a cofactor.

The protein localises to the cytoplasm. It carries out the reaction shikimate + ATP = 3-phosphoshikimate + ADP + H(+). It functions in the pathway metabolic intermediate biosynthesis; chorismate biosynthesis; chorismate from D-erythrose 4-phosphate and phosphoenolpyruvate: step 5/7. Catalyzes the specific phosphorylation of the 3-hydroxyl group of shikimic acid using ATP as a cosubstrate. The polypeptide is Shikimate kinase (Pseudomonas entomophila (strain L48)).